We begin with the raw amino-acid sequence, 65 residues long: Large ribosomal subunit protein bL33 (65 aa).

The disordered stretch occupies residues 19–40 (TVPSSKKRSAGVSRYTTEKNRR).

It belongs to the bacterial ribosomal protein bL33 family.

This chain is Large ribosomal subunit protein bL33, found in Prochlorococcus marinus (strain NATL2A).